The chain runs to 1020 residues: Sodium/potassium-transporting ATPase subunit alpha-2 (1020 aa).

A propeptide spanning residues 1-5 (MGRGA) is cleaved from the precursor. The interval 1–31 (MGRGAGREYSPAATTAENGGGKKKQKEKELD) is disordered. At 6-85 (GREYSPAATT…NALTPPPTTP (80 aa)) the chain is on the cytoplasmic side. Ser-10 bears the Phosphoserine mark. Residues 80 to 82 (PPP) are interaction with phosphoinositide-3 kinase. The chain crosses the membrane as a helical span at residues 86-106 (EWVKFCRQLFGGFSILLWIGA). Topologically, residues 107–129 (LLCFLAYGILAAMEDEPSNDNLY) are extracellular. A helical transmembrane segment spans residues 130–150 (LGIVLAAVVIVTGCFSYYQEA). Topologically, residues 151-286 (KSSKIMDSFK…VGQTPIAMEI (136 aa)) are cytoplasmic. The segment covering 212–227 (DNSSLTGESEPQTRSP) has biased composition (polar residues). The interval 212–231 (DNSSLTGESEPQTRSPEFTH) is disordered. The helical transmembrane segment at 287–306 (EHFIQLITGVAVFLGVSFFV) threads the bilayer. Residues 307–318 (LSLILGYSWLEA) are Extracellular-facing. Residues 319-336 (VIFLIGIIVANVPEGLLA) traverse the membrane as a helical segment. The Cytoplasmic portion of the chain corresponds to 337–769 (TVTVCLTLTA…EEGRLIFDNL (433 aa)). Asp-374 acts as the 4-aspartylphosphate intermediate in catalysis. A phosphoserine mark is found at Ser-439, Ser-450, Ser-496, and Ser-559. The residue at position 570 (Thr-570) is a Phosphothreonine. Ser-587 and Ser-672 each carry phosphoserine. Mg(2+)-binding residues include Asp-714 and Asp-718. A helical transmembrane segment spans residues 770-789 (KKSIAYTLTSNIPEITPFLL). At 790–799 (FIIANIPLPL) the chain is on the extracellular side. Residues 800–820 (GTVTILCIDLGTDMVPAISLA) form a helical membrane-spanning segment. The Cytoplasmic portion of the chain corresponds to 821–840 (YEAAESDIMKRQPRNSQTDK). Position 826 is a phosphoserine (Ser-826). A helical membrane pass occupies residues 841 to 863 (LVNERLISMAYGQIGMIQALGGF). The Extracellular segment spans residues 864–915 (FTYFVILAENGFLPSRLLGIRLDWDDRTTNDLEDSYGQEWTYEQRKVVEFTC). The chain crosses the membrane as a helical span at residues 916 to 935 (HTAFFASIVVVQWADLIICK). The Cytoplasmic segment spans residues 936 to 948 (TRRNSVFQQGMKN). The residue at position 940 (Ser-940) is a Phosphoserine; by PKA. Residues 949–967 (KILIFGLLEETALAAFLSY) traverse the membrane as a helical segment. Over 968 to 982 (CPGMGVALRMYPLKV) the chain is Extracellular. The helical transmembrane segment at 983-1003 (TWWFCAFPYSLLIFIYDEVRK) threads the bilayer. The Cytoplasmic portion of the chain corresponds to 1004 to 1020 (LILRRYPGGWVEKETYY).

It belongs to the cation transport ATPase (P-type) (TC 3.A.3) family. Type IIC subfamily. In terms of assembly, the sodium/potassium-transporting ATPase is composed of a catalytic alpha subunit, an auxiliary non-catalytic beta subunit and an additional regulatory subunit. Interacts with regulatory subunit FXYD1.

It localises to the membrane. The protein localises to the cell membrane. The catalysed reaction is K(+)(out) + Na(+)(in) + ATP + H2O = K(+)(in) + Na(+)(out) + ADP + phosphate + H(+). Its function is as follows. This is the catalytic component of the active enzyme, which catalyzes the hydrolysis of ATP coupled with the exchange of sodium and potassium ions across the plasma membrane. This action creates the electrochemical gradient of sodium and potassium ions, providing the energy for active transport of various nutrients. The sequence is that of Sodium/potassium-transporting ATPase subunit alpha-2 (Atp1a2) from Mus musculus (Mouse).